The primary structure comprises 223 residues: von Willebrand factor C domain-containing protein 2-like (223 aa).

Residues 1 to 21 (MGPFLPAICVVLLALNAAVSP) form the signal peptide. VWFC domains are found at residues 51–110 (KGCV…PECK) and 114–172 (NFCE…PICK).

The protein resides in the secreted. The protein localises to the synapse. Functionally, may play a role in bone differentiation and matrix mineralization. May play a role in neural development. This is von Willebrand factor C domain-containing protein 2-like (vwc2l) from Danio rerio (Zebrafish).